A 603-amino-acid chain; its full sequence is Elongation factor 4 (603 aa).

The tr-type G domain occupies 7-189 (VRIRNFCIIA…AVVERIPPPP (183 aa)). GTP contacts are provided by residues 19–24 (DHGKST) and 136–139 (NKID).

The protein belongs to the TRAFAC class translation factor GTPase superfamily. Classic translation factor GTPase family. LepA subfamily.

The protein localises to the cell inner membrane. The enzyme catalyses GTP + H2O = GDP + phosphate + H(+). In terms of biological role, required for accurate and efficient protein synthesis under certain stress conditions. May act as a fidelity factor of the translation reaction, by catalyzing a one-codon backward translocation of tRNAs on improperly translocated ribosomes. Back-translocation proceeds from a post-translocation (POST) complex to a pre-translocation (PRE) complex, thus giving elongation factor G a second chance to translocate the tRNAs correctly. Binds to ribosomes in a GTP-dependent manner. This Trichormus variabilis (strain ATCC 29413 / PCC 7937) (Anabaena variabilis) protein is Elongation factor 4.